A 198-amino-acid polypeptide reads, in one-letter code: Autophagy-related protein 16 (198 aa).

Positions 24-177 form a coiled coil; the sequence is ELVQTCSQMA…NKELVDRWMK (154 aa).

Belongs to the ATG16 family. In terms of assembly, homodimer. Part of the ATG5-ATG12/ATG16 complex. Several units of each may be present in this complex. Interacts directly with ATG12.

The protein resides in the preautophagosomal structure membrane. In terms of biological role, stabilizes the ATG5-ATG12 conjugate. The ATG5-ATG12/ATG16 complex is required for efficient promotion of ATG8-conjugation to phosphatidylethanolamine and ATG8 localization to the pre-autophagosomal structure (PAS). Also recruits ATG3 to the PAS. Involved in endoplasmic reticulum-specific autophagic process and is essential for the survival of cells subjected to severe ER stress. Autophagy is required for proper vegetative growth, asexual/sexual reproduction, and full virulence. Autophagy is particularly involved in the biosynthesis of deoxynivalenol (DON), an important virulence determinant. This chain is Autophagy-related protein 16, found in Gibberella zeae (strain ATCC MYA-4620 / CBS 123657 / FGSC 9075 / NRRL 31084 / PH-1) (Wheat head blight fungus).